The following is a 329-amino-acid chain: Protein RecA (329 aa).

Residue 63–70 (GNESSGKT) participates in ATP binding.

This sequence belongs to the RecA family.

It is found in the cytoplasm. Can catalyze the hydrolysis of ATP in the presence of single-stranded DNA, the ATP-dependent uptake of single-stranded DNA by duplex DNA, and the ATP-dependent hybridization of homologous single-stranded DNAs. It interacts with LexA causing its activation and leading to its autocatalytic cleavage. This is Protein RecA from Malacoplasma penetrans (strain HF-2) (Mycoplasma penetrans).